The following is a 144-amino-acid chain: MNEELQQQYYQLEMYGQQVQKLQEELEKIELMKMELLKSIDSMEGLKDSEDILIPLGGGAFIKAKAMDTKKVIMGAGADVFLEKDISDVVVDFNKSIEDLDKAGSMIIAKIEETAKVAEQMQKDLEEKVQAMEGQMGGAPTLQM.

This sequence belongs to the prefoldin alpha subunit family. As to quaternary structure, heterohexamer of two alpha and four beta subunits.

Its subcellular location is the cytoplasm. Functionally, molecular chaperone capable of stabilizing a range of proteins. Seems to fulfill an ATP-independent, HSP70-like function in archaeal de novo protein folding. This is Prefoldin subunit alpha from Methanococcus aeolicus (strain ATCC BAA-1280 / DSM 17508 / OCM 812 / Nankai-3).